The chain runs to 95 residues: Aspartyl/glutamyl-tRNA(Asn/Gln) amidotransferase subunit C (95 aa).

The protein belongs to the GatC family. As to quaternary structure, heterotrimer of A, B and C subunits.

It carries out the reaction L-glutamyl-tRNA(Gln) + L-glutamine + ATP + H2O = L-glutaminyl-tRNA(Gln) + L-glutamate + ADP + phosphate + H(+). The catalysed reaction is L-aspartyl-tRNA(Asn) + L-glutamine + ATP + H2O = L-asparaginyl-tRNA(Asn) + L-glutamate + ADP + phosphate + 2 H(+). Its function is as follows. Allows the formation of correctly charged Asn-tRNA(Asn) or Gln-tRNA(Gln) through the transamidation of misacylated Asp-tRNA(Asn) or Glu-tRNA(Gln) in organisms which lack either or both of asparaginyl-tRNA or glutaminyl-tRNA synthetases. The reaction takes place in the presence of glutamine and ATP through an activated phospho-Asp-tRNA(Asn) or phospho-Glu-tRNA(Gln). The chain is Aspartyl/glutamyl-tRNA(Asn/Gln) amidotransferase subunit C from Roseobacter denitrificans (strain ATCC 33942 / OCh 114) (Erythrobacter sp. (strain OCh 114)).